The primary structure comprises 105 residues: UPF0060 membrane protein Rmet_4032 (105 aa).

Helical transmembrane passes span 4–24 (VGLY…PYLW), 28–48 (GASP…AWLL), 60–80 (AAYG…VDGV), and 82–102 (PSPW…IIVF).

It belongs to the UPF0060 family.

It is found in the cell inner membrane. The polypeptide is UPF0060 membrane protein Rmet_4032 (Cupriavidus metallidurans (strain ATCC 43123 / DSM 2839 / NBRC 102507 / CH34) (Ralstonia metallidurans)).